A 734-amino-acid polypeptide reads, in one-letter code: Ribosomal RNA large subunit methyltransferase K/L (734 aa).

One can recognise a THUMP domain in the interval 49 to 167; sequence HAYRICMWSR…KTEHTYCLDL (119 aa).

It belongs to the methyltransferase superfamily. RlmKL family.

The protein resides in the cytoplasm. The enzyme catalyses guanosine(2445) in 23S rRNA + S-adenosyl-L-methionine = N(2)-methylguanosine(2445) in 23S rRNA + S-adenosyl-L-homocysteine + H(+). The catalysed reaction is guanosine(2069) in 23S rRNA + S-adenosyl-L-methionine = N(2)-methylguanosine(2069) in 23S rRNA + S-adenosyl-L-homocysteine + H(+). Specifically methylates the guanine in position 2445 (m2G2445) and the guanine in position 2069 (m7G2069) of 23S rRNA. This Acinetobacter baumannii (strain AYE) protein is Ribosomal RNA large subunit methyltransferase K/L.